A 71-amino-acid chain; its full sequence is UPF0434 protein APH_0052 (71 aa).

Positions 52 to 63 (RKLQPEEPKEGS) are enriched in basic and acidic residues. A disordered region spans residues 52 to 71 (RKLQPEEPKEGSELQSSDNQ).

This sequence belongs to the UPF0434 family.

The protein is UPF0434 protein APH_0052 of Anaplasma phagocytophilum (strain HZ).